We begin with the raw amino-acid sequence, 632 residues long: Protein EAP1 (632 aa).

3 disordered regions span residues 1-80 (MELN…KKNK), 149-204 (MGPP…DDEE), and 248-313 (KSKG…PSLS). Composition is skewed to polar residues over residues 7 to 38 (SIIS…SNLF) and 54 to 69 (VESS…ATSG). Ser30 carries the post-translational modification Phosphoserine. Phosphoserine is present on residues Ser281 and Ser282. A compositionally biased stretch (basic and acidic residues) spans 288–298 (NLKRQDKKEES). Phosphoserine occurs at positions 327 and 344. The tract at residues 347-378 (SLPSLDNNNQVPSSNVSVVNNDGNSTPHQSGS) is disordered. Over residues 353–371 (NNNQVPSSNVSVVNNDGNS) the composition is skewed to low complexity. Ser387 is subject to Phosphoserine. Disordered stretches follow at residues 429–541 (QHPP…PPPP) and 587–632 (QGNF…KNIK). 440–447 (GLLNKGKS) lines the ATP pocket. Residues 474–486 (PNFPQRMMPPPPG) are compositionally biased toward pro residues. The segment covering 492–505 (KDSKDVNKKEDRQL) has biased composition (basic and acidic residues). Polar residues-rich tracts occupy residues 507-516 (QNKNPNGTRN), 590-603 (FPPN…SNSP), and 610-621 (INANGKNVTNQL).

Interacts with SMY2, SYH1 and eIF4E.

The protein resides in the cytoplasm. Can regulate translation through binding to eIF4E. Competes with eIF4G and p20 for binding to eIF4E in vivo and inhibits cap-dependent translation in vitro. Plays a role in cell growth and is implicated in the TOR signaling cascade. Functions independently of eIF4E to maintain genetic stability and to attenuate GCN4 translation upon TOR inactivation. The sequence is that of Protein EAP1 (EAP1) from Saccharomyces cerevisiae (strain ATCC 204508 / S288c) (Baker's yeast).